Here is a 134-residue protein sequence, read N- to C-terminus: Cytochrome c-type biogenesis protein CcmE (134 aa).

Over 1-7 the chain is Cytoplasmic; the sequence is MKRKYRR. Residues 8-28 form a helical; Signal-anchor for type II membrane protein membrane-spanning segment; it reads LFVVIITLSIFAGSVVFVLGK. Topologically, residues 29 to 134 are periplasmic; sequence LKNNVSFFYT…MPNKYKTNNL (106 aa). 2 residues coordinate heme: His120 and Tyr124.

The protein belongs to the CcmE/CycJ family.

It is found in the cell inner membrane. In terms of biological role, heme chaperone required for the biogenesis of c-type cytochromes. Transiently binds heme delivered by CcmC and transfers the heme to apo-cytochromes in a process facilitated by CcmF and CcmH. This chain is Cytochrome c-type biogenesis protein CcmE, found in Ehrlichia ruminantium (strain Gardel).